The sequence spans 602 residues: CDPK-related protein kinase (602 aa).

The tract at residues 1–59 is disordered; it reads MGICVSKPSPEPDLHNHHTSIPVNDTSLPPQDNSIPPKDIAIPAQDNNKPPGKKSPFLP. A compositionally biased stretch (polar residues) spans 19–34; it reads TSIPVNDTSLPPQDNS. Repeat copies occupy residues 20–26, 27–33, and 34–40. The interval 20 to 40 is 3 X 7 AA tandem repeats of S-[LI]-P-X-X-D-X; that stretch reads SIPVNDTSLPPQDNSIPPKDI. In terms of domain architecture, Protein kinase spans 148–410; it reads FEVGEEVGRG…AAQALCHSWI (263 aa). Residues 154-162 and lysine 180 contribute to the ATP site; that span reads VGRGHFGYT. The active-site Proton acceptor is aspartate 276. EF-hand domains follow at residues 451–486, 487–527, 528–563, and 564–602; these read VDEL…RNST, DAMK…LEAL, DRWE…LGPS, and IPVH…AKAQ.

This sequence belongs to the protein kinase superfamily. CAMK Ser/Thr protein kinase family. CaMK subfamily.

The catalysed reaction is L-seryl-[protein] + ATP = O-phospho-L-seryl-[protein] + ADP + H(+). The enzyme catalyses L-threonyl-[protein] + ATP = O-phospho-L-threonyl-[protein] + ADP + H(+). This chain is CDPK-related protein kinase (CRK), found in Daucus carota (Wild carrot).